A 304-amino-acid chain; its full sequence is Thiosulfate sulfurtransferase TUM1 (304 aa).

2 Rhodanese domains span residues 20 to 137 (KVHR…PLDS) and 177 to 299 (LAKK…PEWI). The span at 191–201 (RFEGTEPEPRS) shows a compositional bias: basic and acidic residues. Residues 191–222 (RFEGTEPEPRSDIPSGHIPGTQPLPYGSLLDP) form a disordered region. Phosphoserine is present on S201. The Cysteine persulfide intermediate role is filled by C259. A Phosphoserine modification is found at S264.

The protein resides in the mitochondrion. Its subcellular location is the cytoplasm. The enzyme catalyses thiosulfate + hydrogen cyanide = thiocyanate + sulfite + 2 H(+). Functionally, sulfur transferase that accepts persulfite from NFS1 and transfers it to UBA4 in the pathway for 2-thiolation of the wobble uridine base of tRNAs. Stimulates sulfur transfer by NFS1. Involved in metabolism of sterol esters in a tRNA thiolation pathway-independent manner. This Saccharomyces cerevisiae (strain ATCC 204508 / S288c) (Baker's yeast) protein is Thiosulfate sulfurtransferase TUM1.